Here is a 396-residue protein sequence, read N- to C-terminus: Probable arginine kinase F46H5.3 (396 aa).

Residues 47–129 (KIEEGYAKLQ…FDPLIQDYHN (83 aa)) enclose the Phosphagen kinase N-terminal domain. 102 to 106 (GVGVY) is a binding site for substrate. A Phosphagen kinase C-terminal domain is found at 159-396 (FINSTRIRCG…AHLIALEKAA (238 aa)). ATP is bound by residues 162–166 (STRIR) and H226. Residue E266 coordinates substrate. R270 contributes to the ATP binding site. C312 lines the substrate pocket. ATP-binding positions include 321-325 (RASVH), 349-354 (RGIHGE), and D364. Substrate is bound at residue E354.

It belongs to the ATP:guanido phosphotransferase family.

It carries out the reaction L-arginine + ATP = N(omega)-phospho-L-arginine + ADP + H(+). The chain is Probable arginine kinase F46H5.3 from Caenorhabditis elegans.